The chain runs to 178 residues: Large ribosomal subunit protein uL6 (178 aa).

Belongs to the universal ribosomal protein uL6 family. As to quaternary structure, part of the 50S ribosomal subunit.

This protein binds to the 23S rRNA, and is important in its secondary structure. It is located near the subunit interface in the base of the L7/L12 stalk, and near the tRNA binding site of the peptidyltransferase center. This chain is Large ribosomal subunit protein uL6, found in Streptococcus pneumoniae (strain ATCC 700669 / Spain 23F-1).